The following is a 158-amino-acid chain: uncharacterized protein (158 aa).

A run of 2 helical transmembrane segments spans residues 10–30 (LFFIFSGGLVFFFFEFFLNHF) and 40–60 (YITFYFIKNHPSLFLLFNFFL).

It is found in the membrane. This is an uncharacterized protein from Schizosaccharomyces pombe (strain 972 / ATCC 24843) (Fission yeast).